The sequence spans 282 residues: Pantothenate synthetase (282 aa).

30 to 37 serves as a coordination point for ATP; that stretch reads MGNLHDGH. The Proton donor role is filled by histidine 37. Glutamine 61 lines the (R)-pantoate pocket. Glutamine 61 is a beta-alanine binding site. 149–152 provides a ligand contact to ATP; it reads GEKD. A (R)-pantoate-binding site is contributed by glutamine 155. 186–189 contributes to the ATP binding site; the sequence is MSSR.

It belongs to the pantothenate synthetase family. In terms of assembly, homodimer.

The protein resides in the cytoplasm. The enzyme catalyses (R)-pantoate + beta-alanine + ATP = (R)-pantothenate + AMP + diphosphate + H(+). Its pathway is cofactor biosynthesis; (R)-pantothenate biosynthesis; (R)-pantothenate from (R)-pantoate and beta-alanine: step 1/1. Its function is as follows. Catalyzes the condensation of pantoate with beta-alanine in an ATP-dependent reaction via a pantoyl-adenylate intermediate. This chain is Pantothenate synthetase, found in Alteromonas mediterranea (strain DSM 17117 / CIP 110805 / LMG 28347 / Deep ecotype).